Here is a 448-residue protein sequence, read N- to C-terminus: High mobility group B protein 15 (448 aa).

Positions 29–120 (VADPRLFMTS…LLNNYEQIYF (92 aa)) constitute an ARID domain. Residues 219–236 (PQQSHGVLPNTLNISANP) are compositionally biased toward polar residues. Disordered regions lie at residues 219–270 (PQQS…RSGY), 333–352 (KKNGQLISNAVPLQQRLPEQ), and 366–448 (VEED…AEQN). Positions 244 to 255 (TKRRRRRKKSEI) are enriched in basic residues. The HMG box DNA-binding region spans 263 to 330 (PKPNRSGYNF…RYRTEMEDYR (68 aa)). The span at 389–398 (SIETDPELEE) shows a compositional bias: acidic residues. The segment covering 399–412 (PSLNPSGPNLNPNP) has biased composition (low complexity).

The protein belongs to the HMGB family.

It localises to the nucleus. Binds preferentially DNA with A/T-rich content. The protein is High mobility group B protein 15 (HMGB15) of Arabidopsis thaliana (Mouse-ear cress).